Here is a 364-residue protein sequence, read N- to C-terminus: tRNA (adenine(58)-N(1))-methyltransferase catalytic subunit trm61 (364 aa).

S-adenosyl-L-methionine is bound by residues 114–116 (SAS), Glu135, Arg140, 167–168 (DV), and Asp186. Positions 280 to 309 (EQNLSSDAKVEDQDNDSMLGENKSSVSTET) are disordered.

The protein belongs to the class I-like SAM-binding methyltransferase superfamily. TRM61 family. As to quaternary structure, heterotetramer; composed of two copies of TRM6 and two copies of TRM61.

The protein resides in the nucleus. The enzyme catalyses adenosine(58) in tRNA + S-adenosyl-L-methionine = N(1)-methyladenosine(58) in tRNA + S-adenosyl-L-homocysteine + H(+). Its function is as follows. Catalytic subunit of tRNA (adenine-N(1)-)-methyltransferase, which catalyzes the formation of N(1)-methyladenine at position 58 (m1A58) in initiator methionyl-tRNA. The polypeptide is tRNA (adenine(58)-N(1))-methyltransferase catalytic subunit trm61 (cpd1) (Schizosaccharomyces pombe (strain 972 / ATCC 24843) (Fission yeast)).